The sequence spans 447 residues: Glucose-6-phosphate isomerase (447 aa).

Catalysis depends on glutamate 288, which acts as the Proton donor. Residues histidine 309 and lysine 423 contribute to the active site.

This sequence belongs to the GPI family.

The protein localises to the cytoplasm. It carries out the reaction alpha-D-glucose 6-phosphate = beta-D-fructose 6-phosphate. Its pathway is carbohydrate biosynthesis; gluconeogenesis. It participates in carbohydrate degradation; glycolysis; D-glyceraldehyde 3-phosphate and glycerone phosphate from D-glucose: step 2/4. Catalyzes the reversible isomerization of glucose-6-phosphate to fructose-6-phosphate. This is Glucose-6-phosphate isomerase from Lactobacillus gasseri (strain ATCC 33323 / DSM 20243 / BCRC 14619 / CIP 102991 / JCM 1131 / KCTC 3163 / NCIMB 11718 / NCTC 13722 / AM63).